Here is a 281-residue protein sequence, read N- to C-terminus: Stomatin-4 (281 aa).

A helical membrane pass occupies residues 28-48 (WIITIISYLVVLFTLPLSAFF).

Belongs to the band 7/mec-2 family.

The protein resides in the membrane. In Caenorhabditis elegans, this protein is Stomatin-4 (sto-4).